Reading from the N-terminus, the 299-residue chain is ATP phosphoribosyltransferase (299 aa).

Belongs to the ATP phosphoribosyltransferase family. Long subfamily. Mg(2+) serves as cofactor.

It localises to the cytoplasm. The enzyme catalyses 1-(5-phospho-beta-D-ribosyl)-ATP + diphosphate = 5-phospho-alpha-D-ribose 1-diphosphate + ATP. The protein operates within amino-acid biosynthesis; L-histidine biosynthesis; L-histidine from 5-phospho-alpha-D-ribose 1-diphosphate: step 1/9. With respect to regulation, feedback inhibited by histidine. Its function is as follows. Catalyzes the condensation of ATP and 5-phosphoribose 1-diphosphate to form N'-(5'-phosphoribosyl)-ATP (PR-ATP). Has a crucial role in the pathway because the rate of histidine biosynthesis seems to be controlled primarily by regulation of HisG enzymatic activity. The chain is ATP phosphoribosyltransferase from Baumannia cicadellinicola subsp. Homalodisca coagulata.